A 2224-amino-acid chain; its full sequence is Multifunctional protein r (2224 aa).

The GATase (Glutamine amidotransferase) stretch occupies residues 1 to 369 (MASTDCYLAL…PQDTEFLFDV (369 aa)). 3 residues coordinate L-glutamine: serine 55, glycine 240, and glycine 242. The Glutamine amidotransferase type-1 domain occupies 195 to 380 (RIAILDCGLK…MESIQQKDLT (186 aa)). The Nucleophile; for GATase activity role is filled by cysteine 269. L-glutamine contacts are provided by leucine 270, glutamine 273, asparagine 311, glycine 313, and tyrosine 314. Residues histidine 353 and glutamate 355 each act as for GATase activity in the active site. The interval 370–415 (FMESIQQKDLTIPQLIEQRLRPTTPAIDSAPVMPRKVLILGSGGLS) is linker. The CPSase (Carbamoyl-phosphate synthase) stretch occupies residues 416 to 1470 (IGQAGEFDYS…KPPMKTHTDC (1055 aa)). The ATP site is built by arginine 525, arginine 565, glycine 571, glycine 572, lysine 602, glutamate 609, glycine 635, isoleucine 636, histidine 637, glutamine 678, and glutamate 692. ATP-grasp domains follow at residues 529 to 721 (AERV…KLAL) and 1066 to 1257 (SRML…RAIV). 3 residues coordinate Mg(2+): glutamine 678, glutamate 692, and asparagine 694. Glutamine 678, glutamate 692, and asparagine 694 together coordinate Mn(2+). ATP is bound by residues arginine 1102, lysine 1141, leucine 1143, glutamate 1148, glycine 1173, valine 1174, histidine 1175, serine 1176, glutamine 1216, and glutamate 1228. Mg(2+) contacts are provided by glutamine 1216, glutamate 1228, and asparagine 1230. The Mn(2+) site is built by glutamine 1216, glutamate 1228, and asparagine 1230. Residues 1322–1477 (FQIPKNAVLL…TDCMTSRRIV (156 aa)) form the MGS-like domain. A linker region spans residues 1471–1484 (MTSRRIVKLPGFID). The segment at 1485 to 1800 (VHVHLREPGA…GTKVKGRVHR (316 aa)) is DHOase (dihydroorotase). Positions 1486 and 1488 each coordinate Zn(2+). (S)-dihydroorotate contacts are provided by arginine 1490 and asparagine 1520. Residues lysine 1571, histidine 1605, cysteine 1628, histidine 1629, and glutamate 1652 each coordinate Zn(2+). Position 1571 is an N6-carboxylysine (lysine 1571). A (S)-dihydroorotate-binding site is contributed by arginine 1676. Aspartate 1701 is a Zn(2+) binding site. The active-site For DHOase activity is the aspartate 1701. Residues histidine 1705 and proline 1717 each coordinate (S)-dihydroorotate. The interval 1801–1912 (VVLRGEVAFV…QRTTNSNPVA (112 aa)) is linker. Residues 1821-1843 (GQNVRPKQSPLASEASQDLLPSD) are disordered. Residues serine 1883, serine 1885, serine 1892, and serine 1894 each carry the phosphoserine modification. An ATCase (Aspartate transcarbamylase) region spans residues 1913–2224 (HSLMGKHILA…MVVGGRNTAL (312 aa)). Carbamoyl phosphate contacts are provided by arginine 1970 and threonine 1971. Position 1998 (lysine 1998) interacts with L-aspartate. Positions 2019, 2047, and 2050 each coordinate carbamoyl phosphate. 2 residues coordinate L-aspartate: arginine 2080 and arginine 2141. Residues leucine 2180 and proline 2181 each coordinate carbamoyl phosphate.

In the N-terminal section; belongs to the CarA family. The protein in the 2nd section; belongs to the CarB family. It in the 3rd section; belongs to the metallo-dependent hydrolases superfamily. DHOase family. CAD subfamily. This sequence in the C-terminal section; belongs to the aspartate/ornithine carbamoyltransferase superfamily. ATCase family. Requires Mg(2+) as cofactor. Mn(2+) serves as cofactor. Zn(2+) is required as a cofactor.

The protein resides in the cytoplasm. The enzyme catalyses hydrogencarbonate + L-glutamine + 2 ATP + H2O = carbamoyl phosphate + L-glutamate + 2 ADP + phosphate + 2 H(+). It catalyses the reaction L-glutamine + H2O = L-glutamate + NH4(+). The catalysed reaction is hydrogencarbonate + NH4(+) + 2 ATP = carbamoyl phosphate + 2 ADP + phosphate + 2 H(+). It carries out the reaction carbamoyl phosphate + L-aspartate = N-carbamoyl-L-aspartate + phosphate + H(+). The enzyme catalyses (S)-dihydroorotate + H2O = N-carbamoyl-L-aspartate + H(+). Its pathway is pyrimidine metabolism; UMP biosynthesis via de novo pathway; (S)-dihydroorotate from bicarbonate: step 1/3. It functions in the pathway pyrimidine metabolism; UMP biosynthesis via de novo pathway; (S)-dihydroorotate from bicarbonate: step 2/3. It participates in pyrimidine metabolism; UMP biosynthesis via de novo pathway; (S)-dihydroorotate from bicarbonate: step 3/3. Multifunctional protein that encodes the first 3 enzymatic activities of the de novo pyrimidine pathway: carbamoylphosphate synthetase (CPSase; EC 6.3.5.5), aspartate transcarbamylase (ATCase; EC 2.1.3.2) and dihydroorotase (DHOase; EC 3.5.2.3). The CPSase-function is accomplished in 2 steps, by a glutamine-dependent amidotransferase activity (GATase) that binds and cleaves glutamine to produce ammonia, followed by an ammonium-dependent carbamoyl phosphate synthetase, which reacts with the ammonia, hydrogencarbonate and ATP to form carbamoyl phosphate. The endogenously produced carbamoyl phosphate is sequestered and channeled to the ATCase active site. ATCase then catalyzes the formation of carbamoyl-L-aspartate from L-aspartate and carbamoyl phosphate. In the last step, DHOase catalyzes the cyclization of carbamoyl aspartate to dihydroorotate. This chain is Multifunctional protein r (r), found in Drosophila melanogaster (Fruit fly).